Reading from the N-terminus, the 133-residue chain is Large ribosomal subunit protein bL19 (133 aa).

This sequence belongs to the bacterial ribosomal protein bL19 family.

This protein is located at the 30S-50S ribosomal subunit interface and may play a role in the structure and function of the aminoacyl-tRNA binding site. In Stenotrophomonas maltophilia (strain R551-3), this protein is Large ribosomal subunit protein bL19.